The following is a 427-amino-acid chain: tRNA pseudouridine synthase Pus10 (427 aa).

Residue Asp240 is the Nucleophile of the active site. Residues Tyr306 and Tyr378 each contribute to the substrate site.

Belongs to the pseudouridine synthase Pus10 family.

It carries out the reaction uridine(54) in tRNA = pseudouridine(54) in tRNA. The catalysed reaction is uridine(55) in tRNA = pseudouridine(55) in tRNA. Responsible for synthesis of pseudouridine from uracil-54 and uracil-55 in the psi GC loop of transfer RNAs. The polypeptide is tRNA pseudouridine synthase Pus10 (Halorubrum lacusprofundi (strain ATCC 49239 / DSM 5036 / JCM 8891 / ACAM 34)).